The primary structure comprises 536 residues: DEAD-box ATP-dependent RNA helicase 41 (536 aa).

The span at 1–10 shows a compositional bias: basic and acidic residues; the sequence is MEQEENHSAD. The tract at residues 1–25 is disordered; that stretch reads MEQEENHSADHLSAQPGNGNELEES. An HIT-type zinc finger spans residues 40-69; the sequence is GEPRCVICGRYGEYICDQTDDDICSVECKT. The short motif at 137–165 is the Q motif element; that stretch reads MCFSSSGLPEKLVLNLEAAGYVMPTPVQM. The region spanning 168 to 344 is the Helicase ATP-binding domain; sequence IPSSICNRSL…NSLAKNAIHI (177 aa). Position 181-188 (181-188) interacts with ATP; that stretch reads ADTGSGKT. The short motif at 293–296 is the DEAD box element; the sequence is DEVD. The Helicase C-terminal domain maps to 355 to 518; the sequence is SVKQVVIWVE…PIPRELANSK (164 aa).

The protein belongs to the DEAD box helicase family. DDX59 subfamily.

The enzyme catalyses ATP + H2O = ADP + phosphate + H(+). This is DEAD-box ATP-dependent RNA helicase 41 from Oryza sativa subsp. japonica (Rice).